We begin with the raw amino-acid sequence, 335 residues long: Terpene synthase 4 (335 aa).

A DDxx(x)D/E motif motif is present at residues 103 to 108 (DDYIFE). The NDxxSxxxD/E motif motif lies at 243-251 (NDLYSFNRE).

It belongs to the terpene synthase family.

It catalyses the reaction (2E,6E)-farnesyl diphosphate + H2O = (6E)-nerolidol + diphosphate. In terms of biological role, terpene synthase that converts its substrate farnesyl diphosphate (FPP) into the sesquiterpene (E)-nerolidol. The protein is Terpene synthase 4 of Dictyostelium discoideum (Social amoeba).